The sequence spans 624 residues: Polycystin-2-like protein 2 (624 aa).

The Cytoplasmic segment spans residues 1 to 31; the sequence is MAEASRWHRGGASKHKLHYRKEVEITTTLQE. Residues 32 to 52 form a helical membrane-spanning segment; the sequence is LLLYFIFLINLCILTFGMVNP. Over 53–276 the chain is Extracellular; that stretch reads HMYYLNKVMS…YSVKLLRYVS (224 aa). Asn-115 and Asn-138 each carry an N-linked (GlcNAc...) asparagine glycan. Residues 277–297 form a helical membrane-spanning segment; sequence YYDYFIASCEITFCIFLFVFT. Topologically, residues 298 to 314 are cytoplasmic; sequence TQEVKKIKEFKSAYFKS. Residues 315–335 form a helical membrane-spanning segment; the sequence is IWNWLELLLLLLCFVAVSFNT. Residues 336–360 lie on the Extracellular side of the membrane; that stretch reads YYNVQIFLLLGQLLKSTEKYSDFYF. Residues 361–381 form a helical membrane-spanning segment; the sequence is LACWHIYYNNIIAITIFFAWI. Residues 382 to 406 lie on the Cytoplasmic side of the membrane; that stretch reads KIFKFISFNKTMSQLSSTLSRCVKD. The chain crosses the membrane as a helical span at residues 407–427; the sequence is IVGFAIMFFIIFFAYAQLGFL. The Extracellular segment spans residues 428–469; that stretch reads VFGSQVDDFSTFQNSIFAQFRIVLGDFNFAGIQQANPILGPI. Residues 470–490 form a helical membrane-spanning segment; it reads YFITFIFFVFFVLLNMFLAII. Residues 491–624 are Cytoplasmic-facing; that stretch reads NDTYSEVKAD…NQVVRKVSAL (134 aa). Positions 556-576 form a coiled coil; it reads ENEIQNAEQMKKWKERLEKKY.

It belongs to the polycystin family. In terms of assembly, interacts with TRPC1 and TRPC5. In terms of tissue distribution, expressed only in testis. Expressed also in brain and kidney. Expressed only in transformed lymphoblasts.

The protein localises to the membrane. Functionally, exhibits a lower single conductance but no spontaneous channel activity. May function as a regulator of calcium channels or a channel component involving Ca2(+) homeostasis. The polypeptide is Polycystin-2-like protein 2 (Homo sapiens (Human)).